Here is a 197-residue protein sequence, read N- to C-terminus: 3-isopropylmalate dehydratase small subunit (197 aa).

This sequence belongs to the LeuD family. LeuD type 1 subfamily. As to quaternary structure, heterodimer of LeuC and LeuD.

It carries out the reaction (2R,3S)-3-isopropylmalate = (2S)-2-isopropylmalate. It participates in amino-acid biosynthesis; L-leucine biosynthesis; L-leucine from 3-methyl-2-oxobutanoate: step 2/4. Its function is as follows. Catalyzes the isomerization between 2-isopropylmalate and 3-isopropylmalate, via the formation of 2-isopropylmaleate. This Mycobacterium sp. (strain JLS) protein is 3-isopropylmalate dehydratase small subunit.